Consider the following 607-residue polypeptide: LRR receptor kinase SERK2 (607 aa).

A signal peptide spans 1–21 (MRELRVAVLIIAVSLPSFSAS). Over 22–219 (DRQGDALYDM…QSGSHSSKIG (198 aa)) the chain is Extracellular. N-linked (GlcNAc...) asparagine glycans are attached at residues asparagine 36 and asparagine 110. LRR repeat units follow at residues 87-110 (LKYLTVLSLAGNRISGGIPEQFGN), 111-135 (LSSLTSLDLEDNLLVGEIPASLGQL), 136-159 (SKLQLLILSDNNFNGSIPDSLAKI), and 160-183 (SSLTDIRLAYNNLSGQIPGPLFQV). N-linked (GlcNAc...) asparagine glycans are attached at residues asparagine 149, asparagine 171, asparagine 187, and asparagine 206. A helical membrane pass occupies residues 220–240 (IVLGTVGGVIGLLIVAALFLF). Residues 241 to 607 (CKGRRKSHLR…QEAIELSGGR (367 aa)) lie on the Cytoplasmic side of the membrane. The region spanning 284 to 563 (FSERNVLGQG…VVRMLEGEGL (280 aa)) is the Protein kinase domain. Residues 290 to 298 (LGQGGFGKV) and lysine 312 each bind ATP. Aspartate 411 acts as the Proton acceptor in catalysis.

This sequence belongs to the protein kinase superfamily. Ser/Thr protein kinase family.

The protein localises to the cell membrane. It carries out the reaction L-seryl-[protein] + ATP = O-phospho-L-seryl-[protein] + ADP + H(+). The enzyme catalyses L-threonyl-[protein] + ATP = O-phospho-L-threonyl-[protein] + ADP + H(+). Functionally, may be involved in the regulation of plant growth through the brassinosteroid (BR) signaling pathway. The polypeptide is LRR receptor kinase SERK2 (Oryza sativa subsp. japonica (Rice)).